We begin with the raw amino-acid sequence, 424 residues long: GTPase Obg (424 aa).

An Obg domain is found at 1–158; the sequence is MFIDTAKILV…RMINLEIKLL (158 aa). Residues 159-331 enclose the OBG-type G domain; it reads ADVGLIGFPN…LIKEVTRQLS (173 aa). Residues 165–172, 190–194, 212–215, 282–285, and 312–314 contribute to the GTP site; these read GFPNVGKS, FTTLK, DIPG, NKID, and SAA. Mg(2+) contacts are provided by Ser-172 and Thr-192. Residues 345 to 424 enclose the OCT domain; it reads RFMPEEKRFT…LNDFEFDFLL (80 aa).

This sequence belongs to the TRAFAC class OBG-HflX-like GTPase superfamily. OBG GTPase family. As to quaternary structure, monomer. Mg(2+) serves as cofactor.

Its subcellular location is the cytoplasm. An essential GTPase which binds GTP, GDP and possibly (p)ppGpp with moderate affinity, with high nucleotide exchange rates and a fairly low GTP hydrolysis rate. Plays a role in control of the cell cycle, stress response, ribosome biogenesis and in those bacteria that undergo differentiation, in morphogenesis control. This Clostridium novyi (strain NT) protein is GTPase Obg.